An 886-amino-acid polypeptide reads, in one-letter code: Alanine--tRNA ligase (886 aa).

Zn(2+)-binding residues include histidine 564, histidine 568, cysteine 676, and histidine 680.

This sequence belongs to the class-II aminoacyl-tRNA synthetase family. Zn(2+) serves as cofactor.

The protein localises to the cytoplasm. It catalyses the reaction tRNA(Ala) + L-alanine + ATP = L-alanyl-tRNA(Ala) + AMP + diphosphate. Functionally, catalyzes the attachment of alanine to tRNA(Ala) in a two-step reaction: alanine is first activated by ATP to form Ala-AMP and then transferred to the acceptor end of tRNA(Ala). Also edits incorrectly charged Ser-tRNA(Ala) and Gly-tRNA(Ala) via its editing domain. The polypeptide is Alanine--tRNA ligase (Methylobacterium sp. (strain 4-46)).